A 701-amino-acid chain; its full sequence is Acetyl-coenzyme A synthetase, cytoplasmic (701 aa).

The span at methionine 1–valine 26 shows a compositional bias: basic and acidic residues. The segment at methionine 1–arginine 37 is disordered. Residues methionine 1 to valine 107 are interaction with TFEB. At serine 30 the chain carries Phosphoserine. Arginine 219–lysine 222 is a binding site for CoA. A phosphoserine mark is found at serine 263, serine 265, and serine 267. Threonine 363 provides a ligand contact to CoA. Position 418 is an N6-acetyllysine (lysine 418). ATP contacts are provided by residues glycine 439–proline 441, aspartate 463–threonine 468, aspartate 552, and arginine 567. Residues serine 575 and arginine 636 each contribute to the CoA site. The Nuclear localization signal signature appears at lysine 656 to arginine 668. Phosphoserine; by AMPK is present on serine 659. Lysine 661 bears the N6-acetyllysine mark.

This sequence belongs to the ATP-dependent AMP-binding enzyme family. Monomer. Interacts with TFEB. AMPK-mediated phosphorylated form at Ser-659 interacts with KPNA1; this interaction results in nuclear translocation of ACSS2. Interacts with the 'Thr-172' phosphorylated form of PRKAA2. Interacts with CREBBP. Reversibly acetylated at Lys-661. The acetyl-CoA synthase activity is inhibited by acetylation and activated by deacetylation mediated by the deacetylases SIRT1 and SIRT3. Expressed in the hippocampus.

It is found in the cytoplasm. The protein localises to the cytosol. The protein resides in the nucleus. It catalyses the reaction acetate + ATP + CoA = acetyl-CoA + AMP + diphosphate. The catalysed reaction is propanoate + ATP + CoA = propanoyl-CoA + AMP + diphosphate. With respect to regulation, inhibited by acetylation at Lys-661 and activated by deacetylation mediated by the deacetylases SIRT1 and SIRT3. In terms of biological role, catalyzes the synthesis of acetyl-CoA from short-chain fatty acids. Acetate is the preferred substrate but can also utilize propionate with a much lower affinity. Nuclear ACSS2 promotes glucose deprivation-induced lysosomal biogenesis and autophagy, tumor cell survival and brain tumorigenesis. Glucose deprivation results in AMPK-mediated phosphorylation of ACSS2 leading to its translocation to the nucleus where it binds to TFEB and locally produces acetyl-CoA for histone acetylation in the promoter regions of TFEB target genes thereby activating their transcription. The regulation of genes associated with autophagy and lysosomal activity through ACSS2 is important for brain tumorigenesis and tumor survival. Acts as a chromatin-bound transcriptional coactivator that up-regulates histone acetylation and expression of neuronal genes. Can be recruited to the loci of memory-related neuronal genes to maintain a local acetyl-CoA pool, providing the substrate for histone acetylation and promoting the expression of specific genes, which is essential for maintaining long-term spatial memory. This chain is Acetyl-coenzyme A synthetase, cytoplasmic (Acss2), found in Mus musculus (Mouse).